Consider the following 204-residue polypeptide: Pyrrolidone-carboxylate peptidase (204 aa).

Catalysis depends on residues E78, C141, and H165.

The protein belongs to the peptidase C15 family. In terms of assembly, homotetramer.

Its subcellular location is the cytoplasm. The enzyme catalyses Release of an N-terminal pyroglutamyl group from a polypeptide, the second amino acid generally not being Pro.. Its function is as follows. Removes 5-oxoproline from various penultimate amino acid residues except L-proline. In Levilactobacillus brevis (strain ATCC 367 / BCRC 12310 / CIP 105137 / JCM 1170 / LMG 11437 / NCIMB 947 / NCTC 947) (Lactobacillus brevis), this protein is Pyrrolidone-carboxylate peptidase.